A 1170-amino-acid polypeptide reads, in one-letter code: Cellulose synthase-like protein D2 (1170 aa).

2 disordered regions span residues 1-75 and 269-295; these read MASN…PESG and NEVD…EFTS. A compositionally biased stretch (low complexity) spans 10–24; that stretch reads RHSNSSRLSRMSYSG. A compositionally biased stretch (gly residues) spans 273 to 288; it reads NGGGGGGGGGLGGGDG. 2 helical membrane passes run 311 to 331 and 341 to 361; these read VLSP…LFLA and AMWL…SWLL. The active site involves D441. Positions 527-551 form a coiled coil; the sequence is HAREEIKAMKRQREAALDDVVEAVK. Residue D873 is part of the active site. 6 consecutive transmembrane segments (helical) span residues 955-975, 981-1001, 1027-1047, 1070-1090, 1104-1124, and 1134-1154; these read IFLI…QFIV, TFLT…VLEI, LAAV…SFTL, SLMI…AVGF, LLGG…FAKG, and TIVF…WVAI.

It belongs to the glycosyltransferase 2 family. Plant cellulose synthase-like D subfamily.

It localises to the golgi apparatus membrane. Its function is as follows. Thought to be a Golgi-localized beta-glycan synthase that polymerize the backbones of noncellulosic polysaccharides (hemicelluloses) of plant cell wall. The sequence is that of Cellulose synthase-like protein D2 (CSLD2) from Oryza sativa subsp. indica (Rice).